The sequence spans 377 residues: Erythronate-4-phosphate dehydrogenase (377 aa).

Residues S45 and T67 each contribute to the substrate site. NAD(+) contacts are provided by residues D147, 210–212, and D236; that span reads ASR. The active site involves R212. E241 is an active-site residue. Residue H258 is the Proton donor of the active site. G261 serves as a coordination point for NAD(+). Substrate is bound at residue Y262.

The protein belongs to the D-isomer specific 2-hydroxyacid dehydrogenase family. PdxB subfamily. Homodimer.

Its subcellular location is the cytoplasm. It catalyses the reaction 4-phospho-D-erythronate + NAD(+) = (R)-3-hydroxy-2-oxo-4-phosphooxybutanoate + NADH + H(+). Its pathway is cofactor biosynthesis; pyridoxine 5'-phosphate biosynthesis; pyridoxine 5'-phosphate from D-erythrose 4-phosphate: step 2/5. In terms of biological role, catalyzes the oxidation of erythronate-4-phosphate to 3-hydroxy-2-oxo-4-phosphonooxybutanoate. The polypeptide is Erythronate-4-phosphate dehydrogenase (Aeromonas salmonicida (strain A449)).